The following is a 121-amino-acid chain: Large ribosomal subunit protein uL22 (121 aa).

The protein belongs to the universal ribosomal protein uL22 family. As to quaternary structure, part of the 50S ribosomal subunit.

This protein binds specifically to 23S rRNA; its binding is stimulated by other ribosomal proteins, e.g. L4, L17, and L20. It is important during the early stages of 50S assembly. It makes multiple contacts with different domains of the 23S rRNA in the assembled 50S subunit and ribosome. Functionally, the globular domain of the protein is located near the polypeptide exit tunnel on the outside of the subunit, while an extended beta-hairpin is found that lines the wall of the exit tunnel in the center of the 70S ribosome. The chain is Large ribosomal subunit protein uL22 from Synechococcus sp. (strain CC9605).